The primary structure comprises 140 residues: Transcription antitermination protein NusB (140 aa).

This sequence belongs to the NusB family.

In terms of biological role, involved in transcription antitermination. Required for transcription of ribosomal RNA (rRNA) genes. Binds specifically to the boxA antiterminator sequence of the ribosomal RNA (rrn) operons. This Alteromonas mediterranea (strain DSM 17117 / CIP 110805 / LMG 28347 / Deep ecotype) protein is Transcription antitermination protein NusB.